Reading from the N-terminus, the 719-residue chain is La-related protein 4 (719 aa).

M1 bears the N-acetylmethionine mark. The interval 12 to 21 (TGLNPNAKVW) is interaction with PABPC1. Positions 21-55 (WQEIPSGNPDGTPVTEPSWHETAATSGSHPEGHTE) are disordered. The interval 107 to 299 (SSAISTEDLK…PIQTPTQYPS (193 aa)) is interaction with the poly-A tract of mRNA. The HTH La-type RNA-binding domain occupies 109–198 (AISTEDLKEC…RPSHKRCIVI (90 aa)). An RRM domain is found at 199 to 277 (LREIPETTPV…KAINTFFAKN (79 aa)). R363 is modified (omega-N-methylarginine). 2 disordered regions span residues 363-398 (RPFP…LSRS) and 437-470 (GRGR…APTP). The span at 376–389 (SSSGSEHSTEGSVS) shows a compositional bias: low complexity. A phosphoserine mark is found at S387 and S396. Residues 439–448 (GRRTLFRGRR) show a composition bias toward basic residues. A compositionally biased stretch (low complexity) spans 460–470 (PAATEAKAPTP). A Phosphoserine modification is found at S500. Composition is skewed to polar residues over residues 529–538 (DCTSAPLSIS) and 578–599 (SSPT…SNIN). 3 disordered regions span residues 529 to 562 (DCTS…QMED), 576 to 601 (PVSS…INPP), and 615 to 719 (AEVC…RSPK). A phosphoserine mark is found at S578, S592, and S642. Residue T644 is modified to Phosphothreonine. Positions 654-673 (KPVEKPHEKPETRASKDHSG) are enriched in basic and acidic residues. R681 is modified (omega-N-methylarginine). S717 carries the phosphoserine modification.

As to quaternary structure, interacts (via N-terminal region) with PABPC1. Interacts with RACK1.

It is found in the cytoplasm. The protein localises to the stress granule. Its subcellular location is the cytosol. Its function is as follows. RNA binding protein that binds to the poly-A tract of mRNA molecules. Associates with the 40S ribosomal subunit and with polysomes. Plays a role in the regulation of mRNA translation. Plays a role in the regulation of cell morphology and cytoskeletal organization. The chain is La-related protein 4 (Larp4) from Mus musculus (Mouse).